Reading from the N-terminus, the 139-residue chain is Nucleoside diphosphate kinase (139 aa).

Lys-11, Phe-59, Arg-87, Thr-93, Arg-104, and Asn-114 together coordinate ATP. His-117 functions as the Pros-phosphohistidine intermediate in the catalytic mechanism.

This sequence belongs to the NDK family. As to quaternary structure, homotetramer. Mg(2+) is required as a cofactor.

It localises to the cytoplasm. It carries out the reaction a 2'-deoxyribonucleoside 5'-diphosphate + ATP = a 2'-deoxyribonucleoside 5'-triphosphate + ADP. The enzyme catalyses a ribonucleoside 5'-diphosphate + ATP = a ribonucleoside 5'-triphosphate + ADP. Its function is as follows. Major role in the synthesis of nucleoside triphosphates other than ATP. The ATP gamma phosphate is transferred to the NDP beta phosphate via a ping-pong mechanism, using a phosphorylated active-site intermediate. The polypeptide is Nucleoside diphosphate kinase (Flavobacterium johnsoniae (strain ATCC 17061 / DSM 2064 / JCM 8514 / BCRC 14874 / CCUG 350202 / NBRC 14942 / NCIMB 11054 / UW101) (Cytophaga johnsonae)).